Here is a 216-residue protein sequence, read N- to C-terminus: MHIVKIGGSLTYDAKPLLKALKNYAKENNKKIVIIPGGGEFANVVRKIDKALNISNSLSHKLAIKCMDLIGEVYAEIGYIKAYDTLFDLKREIEKEKIAILLPSKILLSTDIAEHSWAITSDSLSLYIGKLLDVREVIIATDVDGIYDKFPGGKLLNIINANDIKGLTSVDETFPILLKQFKMNAYVVNGRHPERVMDILEGKHNIYTKIVGIDKI.

ATP-binding positions include 5–9, G39, D142, 147–152, and G166; these read KIGGS and YDKFPG.

It belongs to the MfnE family. In terms of assembly, homotrimer. Mg(2+) serves as cofactor.

The catalysed reaction is [5-(aminomethyl)-3-furyl]methyl phosphate + ATP = [5-(aminomethyl)furan-3-yl]methyl diphosphate + ADP. Its pathway is cofactor biosynthesis; methanofuran biosynthesis. With respect to regulation, inhibited by EDTA. Catalyzes the formation of 5-(aminomethyl)-3-furanmethanol diphosphate (F1-PP) from 5-(aminomethyl)-3-furanmethanol phosphate (F1-P) and ATP. In vitro, can also act as an adenylate kinase that catalyzes the transfer of a phosphoryl group from ATP to AMP, generating two molecules of ADP. The polypeptide is [5-(aminomethyl)furan-3-yl]methyl phosphate kinase (Methanocaldococcus jannaschii (strain ATCC 43067 / DSM 2661 / JAL-1 / JCM 10045 / NBRC 100440) (Methanococcus jannaschii)).